The primary structure comprises 562 residues: 3-(3-hydroxy-phenyl)propionate/3-hydroxycinnamic acid hydroxylase (562 aa).

FAD is bound by residues 8–37 (DVVIVGAGPVGLTLANILGGQGVRTLIIEE) and 275–285 (FRKGRMLLAGD).

This sequence belongs to the PheA/TfdB FAD monooxygenase family. It depends on FAD as a cofactor.

It catalyses the reaction 3-(3-hydroxyphenyl)propanoate + NADH + O2 + H(+) = 3-(2,3-dihydroxyphenyl)propanoate + NAD(+) + H2O. The catalysed reaction is (2E)-3-(3-hydroxyphenyl)prop-2-enoate + NADH + O2 + H(+) = (2E)-3-(2,3-dihydroxyphenyl)prop-2-enoate + NAD(+) + H2O. It participates in aromatic compound metabolism; 3-phenylpropanoate degradation. Functionally, catalyzes the insertion of one atom of molecular oxygen into position 2 of the phenyl ring of 3-(3-hydroxyphenyl)propionate (3-HPP) and hydroxycinnamic acid (3HCI). This is 3-(3-hydroxy-phenyl)propionate/3-hydroxycinnamic acid hydroxylase from Mycolicibacterium smegmatis (strain ATCC 700084 / mc(2)155) (Mycobacterium smegmatis).